Reading from the N-terminus, the 358-residue chain is Serine/threonine-protein phosphatase 2A activator 2 (358 aa).

This sequence belongs to the PTPA-type PPIase family.

Its subcellular location is the cytoplasm. The catalysed reaction is [protein]-peptidylproline (omega=180) = [protein]-peptidylproline (omega=0). PPIases accelerate the folding of proteins. It catalyzes the cis-trans isomerization of proline imidic peptide bonds in oligopeptides. Acts as a regulatory subunit for PP2A-like phosphatases modulating their activity or substrate specificity, probably by inducing a conformational change in the catalytic subunit, a direct target of the PPIase. Can reactivate inactive phosphatase PP2A-phosphatase methylesterase complexes (PP2Ai) in presence of ATP and Mg(2+) by dissociating the inactive form from the complex. The sequence is that of Serine/threonine-protein phosphatase 2A activator 2 (RRD2) from Candida albicans (strain SC5314 / ATCC MYA-2876) (Yeast).